Reading from the N-terminus, the 850-residue chain is Mitochondrial escape protein 2 (850 aa).

Residues 1–44 constitute a mitochondrion transit peptide; the sequence is MLLVRTTSLNVSRMPVPCLARGIGILKGKYRLANLMNAQPSVRH. The disordered stretch occupies residues 44 to 66; sequence HVSSEIQQKDQQAGESNTATDTG. Topologically, residues 45–287 are mitochondrial matrix; sequence VSSEIQQKDQ…VSNFFTNHTR (243 aa). The segment covering 47-64 has biased composition (polar residues); it reads SEIQQKDQQAGESNTATD. The RRM domain maps to 198 to 272; the sequence is TTIVIKFQGP…TVLHIQYENI (75 aa). A helical transmembrane segment spans residues 288–308; sequence IAIPVLFALLSIFAVLVFDPI. Residues 309-850 lie on the Mitochondrial intermembrane side of the membrane; the sequence is REFSIEQKIT…CEEEIKNLSK (542 aa). Over residues 607-621 the composition is skewed to basic and acidic residues; that stretch reads KGENVKEPESEKEIA. The segment at 607 to 633 is disordered; sequence KGENVKEPESEKEIAENNDSDSEADTS.

It belongs to the YME2 family.

It is found in the mitochondrion inner membrane. Its function is as follows. Plays a role in maintaining the mitochondrial genome and in controlling the mtDNA escape. Involved in the regulation of mtDNA nucleotide structure and number. May have a dispensable role in early maturation of pre-rRNA. In Saccharomyces cerevisiae (strain YJM789) (Baker's yeast), this protein is Mitochondrial escape protein 2 (YME2).